Reading from the N-terminus, the 266-residue chain is Undecaprenyl-diphosphatase (266 aa).

The next 8 membrane-spanning stretches (helical) occupy residues 1-21 (MTWL…FLPI), 39-59 (QGLA…MVYF), 87-107 (WAVI…DSWI), 111-131 (LRSA…LGMA), 143-163 (FTLK…IPGT), 186-206 (FSFL…GLEL), 217-237 (EIAG…HLFL), and 243-263 (IGFM…LVWL).

This sequence belongs to the UppP family.

The protein localises to the cell inner membrane. It catalyses the reaction di-trans,octa-cis-undecaprenyl diphosphate + H2O = di-trans,octa-cis-undecaprenyl phosphate + phosphate + H(+). In terms of biological role, catalyzes the dephosphorylation of undecaprenyl diphosphate (UPP). Confers resistance to bacitracin. This is Undecaprenyl-diphosphatase from Hahella chejuensis (strain KCTC 2396).